The chain runs to 378 residues: Cytochrome P450 2C15 (378 aa).

Heme is bound at residue C323.

Belongs to the cytochrome P450 family. Heme is required as a cofactor.

The protein resides in the endoplasmic reticulum membrane. It localises to the microsome membrane. The enzyme catalyses an organic molecule + reduced [NADPH--hemoprotein reductase] + O2 = an alcohol + oxidized [NADPH--hemoprotein reductase] + H2O + H(+). Its function is as follows. Cytochromes P450 are a group of heme-thiolate monooxygenases. In liver microsomes, this enzyme is involved in an NADPH-dependent electron transport pathway. It oxidizes a variety of structurally unrelated compounds, including steroids, fatty acids, and xenobiotics. The polypeptide is Cytochrome P450 2C15 (CYP2C15) (Oryctolagus cuniculus (Rabbit)).